Here is a 427-residue protein sequence, read N- to C-terminus: MAVSPHISPTLSRYKFFSTSVVENPNFSPYRIYSRRRVTKSHLQAHNSTTSYGRTELSSSKKLWIRQRSFSEMEVEQAQLEDDEEQVEIDIVDEASLLSLSMKPDRNMALLDDYEMEELGHTPNTHHRSGYVAVVGMPNVGKSTLSNQMIGQKISIVTDKPQTTRHRILGICSSPEYQMILYDTPGVIEKKMHRLDTMMMKNVRDAAINADCVVILVDACKTPTNIEEVLKEGLGDLEKKPPMLLVMNKKDLIKPGEIAKKLEWYEKFTDVDEVIPVSAKYGHGIEDVKEWILSKLPFGPPYYPKDIVSEHPERFFVSEIVREKIFMQYRNEVPYACQVNVLSYKTRPAAKDFIQVEVVVDKNSQKIILIGKEGKALKTLATAARLDIEDFLQKKVFLEVEVKVKENWRQDEGLLKYYGYGGQIRAM.

The N-terminal 39 residues, 1–39 (MAVSPHISPTLSRYKFFSTSVVENPNFSPYRIYSRRRVT), are a transit peptide targeting the chloroplast. The Era-type G domain occupies 128 to 298 (RSGYVAVVGM…KEWILSKLPF (171 aa)). The tract at residues 136–143 (GMPNVGKS) is G1. 136 to 143 (GMPNVGKS) lines the GTP pocket. The segment at 162–166 (QTTRH) is G2. The interval 183–186 (DTPG) is G3. GTP contacts are provided by residues 183 to 187 (DTPGV) and 248 to 251 (NKKD). Residues 248-251 (NKKD) are G4. Residues 277–279 (VSA) are G5. In terms of domain architecture, KH type-2 spans 329–406 (YRNEVPYACQ…FLEVEVKVKE (78 aa)).

This sequence belongs to the TRAFAC class TrmE-Era-EngA-EngB-Septin-like GTPase superfamily. Era GTPase family.

It is found in the plastid. The protein localises to the chloroplast stroma. The protein resides in the chloroplast nucleoid. Nuclear genome-encoded probable GTPase involved in ribosome biogenesis in chloroplasts. Plays a role in 16S rRNA maturation in plastids and may contribute to the assembly of the small (30S) ribosomal subunit. The protein is GTPase ERA-like, chloroplastic of Arabidopsis thaliana (Mouse-ear cress).